The primary structure comprises 195 residues: Large ribosomal subunit protein uL18 (195 aa).

Belongs to the universal ribosomal protein uL18 family. As to quaternary structure, part of the 50S ribosomal subunit. Contacts the 5S and 23S rRNAs.

Functionally, this is one of the proteins that bind and probably mediate the attachment of the 5S RNA into the large ribosomal subunit, where it forms part of the central protuberance. In Nanoarchaeum equitans (strain Kin4-M), this protein is Large ribosomal subunit protein uL18.